The chain runs to 71 residues: MPVIKVRENESFDVALRRFKRSCEKAGLLAEVRAREFYEKPTTIRKREKASLAKRHAKRNARENARNTRLY.

Residues 48-59 (EKASLAKRHAKR) show a composition bias toward basic residues. A disordered region spans residues 48–71 (EKASLAKRHAKRNARENARNTRLY). Basic and acidic residues predominate over residues 60–71 (NARENARNTRLY).

This sequence belongs to the bacterial ribosomal protein bS21 family.

The sequence is that of Small ribosomal subunit protein bS21 from Actinobacillus pleuropneumoniae serotype 5b (strain L20).